The chain runs to 290 residues: GTPase Era (290 aa).

The 168-residue stretch at 2-169 (KSGFAAILGR…KNKIYENFSE (168 aa)) folds into the Era-type G domain. The tract at residues 10 to 17 (GRPSTGKS) is G1. 10–17 (GRPSTGKS) serves as a coordination point for GTP. A G2 region spans residues 36 to 40 (QTTRN). The interval 57–60 (DTPG) is G3. GTP is bound by residues 57–61 (DTPGF) and 119–122 (NKVD). Residues 119–122 (NKVD) are G4. The tract at residues 148-150 (ISA) is G5. A KH type-2 domain is found at 200-276 (LKEELPYSLY…NLFLQVKLKK (77 aa)).

Belongs to the TRAFAC class TrmE-Era-EngA-EngB-Septin-like GTPase superfamily. Era GTPase family. In terms of assembly, monomer.

Its subcellular location is the cytoplasm. It is found in the cell inner membrane. Functionally, an essential GTPase that binds both GDP and GTP, with rapid nucleotide exchange. Plays a role in 16S rRNA processing and 30S ribosomal subunit biogenesis and possibly also in cell cycle regulation and energy metabolism. The polypeptide is GTPase Era (Borreliella afzelii (strain PKo) (Borrelia afzelii)).